Reading from the N-terminus, the 158-residue chain is SsrA-binding protein (158 aa).

The protein belongs to the SmpB family.

The protein resides in the cytoplasm. Its function is as follows. Required for rescue of stalled ribosomes mediated by trans-translation. Binds to transfer-messenger RNA (tmRNA), required for stable association of tmRNA with ribosomes. tmRNA and SmpB together mimic tRNA shape, replacing the anticodon stem-loop with SmpB. tmRNA is encoded by the ssrA gene; the 2 termini fold to resemble tRNA(Ala) and it encodes a 'tag peptide', a short internal open reading frame. During trans-translation Ala-aminoacylated tmRNA acts like a tRNA, entering the A-site of stalled ribosomes, displacing the stalled mRNA. The ribosome then switches to translate the ORF on the tmRNA; the nascent peptide is terminated with the 'tag peptide' encoded by the tmRNA and targeted for degradation. The ribosome is freed to recommence translation, which seems to be the essential function of trans-translation. In Chloroflexus aggregans (strain MD-66 / DSM 9485), this protein is SsrA-binding protein.